We begin with the raw amino-acid sequence, 317 residues long: MLGEQAYLDLCKQIFKTGEQRGDRTNTGTHSIFGHQIRFDLNKGFPLLTTKRVPFRLVASELLWFIKGDTNIRYLLKHNNNIWNEWAFEKWVNSADYQGPDMANFGLRSQKDENFNKQYQEQMELFKTRILEDDSFADKYGDLGSVYGKQWRNWKTTQNETIDQLKDVIHSIKTNPNSRRHIVSAWNPEDIPTMALPPCHTLFQFYVSNGKLSCQLYQRSADVFLGVPFNIASYALLTHLIAHECGLEVGDFVHTFGDAHIYSNHVEQVETQLEREIRDFPQLIINKDKNSIFEMDLDDLVIENYNPHPSIKAPIAV.

Residues Arg24 and 179-180 each bind dUMP; that span reads RR. Residue Cys199 is the Nucleophile of the active site. DUMP-binding positions include 219-222, Asn230, and 260-262; these read RSAD and HIY. Position 222 (Asp222) interacts with (6R)-5,10-methylene-5,6,7,8-tetrahydrofolate. Ala316 serves as a coordination point for (6R)-5,10-methylene-5,6,7,8-tetrahydrofolate.

It belongs to the thymidylate synthase family. Bacterial-type ThyA subfamily. As to quaternary structure, homodimer.

Its subcellular location is the cytoplasm. The catalysed reaction is dUMP + (6R)-5,10-methylene-5,6,7,8-tetrahydrofolate = 7,8-dihydrofolate + dTMP. It functions in the pathway pyrimidine metabolism; dTTP biosynthesis. Its function is as follows. Catalyzes the reductive methylation of 2'-deoxyuridine-5'-monophosphate (dUMP) to 2'-deoxythymidine-5'-monophosphate (dTMP) while utilizing 5,10-methylenetetrahydrofolate (mTHF) as the methyl donor and reductant in the reaction, yielding dihydrofolate (DHF) as a by-product. This enzymatic reaction provides an intracellular de novo source of dTMP, an essential precursor for DNA biosynthesis. The chain is Thymidylate synthase from Oceanobacillus iheyensis (strain DSM 14371 / CIP 107618 / JCM 11309 / KCTC 3954 / HTE831).